We begin with the raw amino-acid sequence, 250 residues long: 5-oxoprolinase subunit A (250 aa).

It belongs to the LamB/PxpA family. In terms of assembly, forms a complex composed of PxpA, PxpB and PxpC.

It catalyses the reaction 5-oxo-L-proline + ATP + 2 H2O = L-glutamate + ADP + phosphate + H(+). Catalyzes the cleavage of 5-oxoproline to form L-glutamate coupled to the hydrolysis of ATP to ADP and inorganic phosphate. The polypeptide is 5-oxoprolinase subunit A (Thermus thermophilus (strain ATCC 27634 / DSM 579 / HB8)).